A 546-amino-acid polypeptide reads, in one-letter code: Probable E3 ubiquitin-protein ligase NGR_a03640 (546 aa).

Residues 1 to 70 (MNVQRPGLAV…RPWEGRPQEA (70 aa)) are disordered. The interval 1–248 (MNVQRPGLAV…YAGPQIFLPM (248 aa)) is interaction with target proteins. The segment covering 22–48 (SEPGSPAAAARWVEASTEAEASAASSS) has biased composition (low complexity). The segment covering 58–67 (AEERPWEGRP) has biased composition (basic and acidic residues). LRR repeat units follow at residues 104-125 (GLRR…LPGT), 126-144 (LLEL…DLPA), 145-166 (GLQR…LPAA), 167-186 (LEWL…MIPP), and 187-208 (ELIW…LLTQ). The tract at residues 249–256 (GPVELARR) is linker. In terms of domain architecture, NEL spans 257–546 (PLHEVVADWL…KVLRGRGLEL (290 aa)). The E3 ubiquitin-protein ligase catalytic domain stretch occupies residues 257–546 (PLHEVVADWL…KVLRGRGLEL (290 aa)). C338 (glycyl thioester intermediate) is an active-site residue.

The protein belongs to the LRR-containing bacterial E3 ligase family. In terms of processing, ubiquitinated in the presence of host E1 ubiquitin-activating enzyme, E2 ubiquitin-conjugating enzyme and ubiquitin.

It localises to the secreted. It is found in the host cytoplasm. In terms of biological role, effector proteins function to alter host cell physiology and promote bacterial survival in host tissues. This protein is an E3 ubiquitin ligase that interferes with host's ubiquitination pathway. In Sinorhizobium fredii (strain NBRC 101917 / NGR234), this protein is Probable E3 ubiquitin-protein ligase NGR_a03640.